The chain runs to 298 residues: Putative GATA zinc finger domain-containing protein 25 (298 aa).

The stretch at 4 to 37 (DNKNKNDNYQESIQRIVNQRNNLLKEIENKINQQ) forms a coiled coil. The tract at residues 148-227 (QQQLQQSHTK…RGRPSKPKPE (80 aa)) is disordered. The span at 183–202 (EENEENEENEENEENEENEE) shows a compositional bias: acidic residues. Residues 203 to 212 (NKEKDVEVAK) show a composition bias toward basic and acidic residues. Positions 214-223 (NKPKRGRPSK) are enriched in basic residues. A GATA-type; degenerate zinc finger spans residues 229-256 (CFRYGTRSCPYWRKNVIKGELVDVCNAC).

This chain is Putative GATA zinc finger domain-containing protein 25 (gtaY), found in Dictyostelium discoideum (Social amoeba).